The primary structure comprises 252 residues: Urease accessory protein UreD (252 aa).

It belongs to the UreD family. In terms of assembly, ureD, UreF and UreG form a complex that acts as a GTP-hydrolysis-dependent molecular chaperone, activating the urease apoprotein by helping to assemble the nickel containing metallocenter of UreC. The UreE protein probably delivers the nickel.

It localises to the cytoplasm. Its function is as follows. Required for maturation of urease via the functional incorporation of the urease nickel metallocenter. In Streptomyces avermitilis (strain ATCC 31267 / DSM 46492 / JCM 5070 / NBRC 14893 / NCIMB 12804 / NRRL 8165 / MA-4680), this protein is Urease accessory protein UreD.